A 155-amino-acid polypeptide reads, in one-letter code: Peptide deformylase 2 (155 aa).

Fe cation-binding residues include Cys90 and His132. Glu133 is a catalytic residue. Fe cation is bound at residue His136.

This sequence belongs to the polypeptide deformylase family. Fe(2+) serves as cofactor.

It catalyses the reaction N-terminal N-formyl-L-methionyl-[peptide] + H2O = N-terminal L-methionyl-[peptide] + formate. Its function is as follows. Removes the formyl group from the N-terminal Met of newly synthesized proteins. Requires at least a dipeptide for an efficient rate of reaction. N-terminal L-methionine is a prerequisite for activity but the enzyme has broad specificity at other positions. The protein is Peptide deformylase 2 of Clostridium perfringens (strain 13 / Type A).